Reading from the N-terminus, the 1442-residue chain is ABC transporter G family member 35 (1442 aa).

In terms of domain architecture, ABC transporter 1 spans 169–442 (LGMIGIRLAK…FESFGFKCPE (274 aa)). 202 to 209 (GPPSSGKT) provides a ligand contact to ATP. In terms of domain architecture, ABC transmembrane type-2 1 spans 520–733 (ELLKSCWDKE…AFNAITVNEL (214 aa)). 7 helical membrane-spanning segments follow: residues 538-558 (FFYV…STLY), 573-593 (IYVG…LAEM), 619-639 (LPTF…WMVV), 657-677 (FLII…IAST), 683-703 (IANT…GFLL), 714-734 (WAYW…NELF), and 769-789 (IGVG…TLAL). Residues 840 to 1092 (MSFDDVKYFV…KVVEYFESFP (253 aa)) enclose the ABC transporter 2 domain. An ATP-binding site is contributed by 885–892 (GVSGAGKT). Residues 1165–1379 (GQFKSCLWKQ…TIYGLITSQY (215 aa)) enclose the ABC transmembrane type-2 2 domain. Transmembrane regions (helical) follow at residues 1186 to 1206 (LVRF…FWQI), 1218 to 1238 (MVIG…CSTV), 1272 to 1292 (LPYV…MVGF), 1299 to 1319 (FLWF…YGMM), 1329 to 1349 (VASI…GFFI), 1357 to 1377 (WWVW…LITS), and 1414 to 1434 (PVAG…AFCI).

The protein belongs to the ABC transporter superfamily. ABCG family. PDR (TC 3.A.1.205) subfamily. Ubiquitous with higher levels in roots.

Its subcellular location is the membrane. Functionally, may be a general defense protein. In Arabidopsis thaliana (Mouse-ear cress), this protein is ABC transporter G family member 35 (ABCG35).